Consider the following 270-residue polypeptide: Multi-heme protein MamP (270 aa).

Residues 1-6 (MNSKLV) are Cytoplasmic-facing. A transmembrane span lies at residues 7–20 (LLVVGVVFALVLVI). At 21–270 (GRQGGVVAPQ…GPCEACHVIN (250 aa)) the chain is on the lumenal side. The tract at residues 84–201 (NLKVFEGHWQ…GGLGFAQLEG (118 aa)) is PDZ. The MCR (magnetochrome) 1 motif lies at 205-225 (ILPGDPRPHGYRGACTDCHPV). Positions 219, 222, 223, 263, 266, and 267 each coordinate heme. The MCR 2 motif lies at 245–269 (ITRDAVTRGVSPHEVRGPCEACHVI).

The protein belongs to the magnetosome MamP family. In terms of assembly, homodimer. The cofactor is heme. Post-translationally, subject to proteolytic cleavage which requires both MamE and MamO.

It is found in the cell inner membrane. Its function is as follows. Involved in redox-control of magnetite formation. Oxidizes Fe(2+) at alkaline pH; successively forms ferrihydrite (Fe(3+)(2)O(3) 0.5 H(2)O) then magnetite (Fe(3)O(4)) from an Fe(2+) solution. This chain is Multi-heme protein MamP, found in Magnetospirillum gryphiswaldense (strain DSM 6361 / JCM 21280 / NBRC 15271 / MSR-1).